We begin with the raw amino-acid sequence, 1082 residues long: SURP and G-patch domain-containing protein 2 (1082 aa).

Thr-7 carries the phosphothreonine modification. The disordered stretch occupies residues 65–97; sequence LSGSVAHSRDAGREGLRSDVFPGPSFRSSNPSI. Residues 71–81 show a composition bias toward basic and acidic residues; the sequence is HSRDAGREGLR. 2 positions are modified to phosphoserine: Ser-96 and Ser-224. Lys-228 participates in a covalent cross-link: Glycyl lysine isopeptide (Lys-Gly) (interchain with G-Cter in SUMO2). Thr-275 is modified (phosphothreonine). Ser-277 is modified (phosphoserine). Lys-305 participates in a covalent cross-link: Glycyl lysine isopeptide (Lys-Gly) (interchain with G-Cter in SUMO2). A phosphoserine mark is found at Ser-315, Ser-573, and Ser-603. An SURP motif 1 repeat occupies 590–633; the sequence is IDQLVKRVIEGSLSPKERTLLKEDPAYWFLSDENSLEYKYYKLK. A Glycyl lysine isopeptide (Lys-Gly) (interchain with G-Cter in SUMO2) cross-link involves residue Lys-650. The tract at residues 694 to 779 is disordered; the sequence is RRATTGTQTL…QTSSPCPSAD (86 aa). The segment covering 697-708 has biased composition (low complexity); sequence TTGTQTLLSSGT. Basic and acidic residues predominate over residues 727-738; it reads LPDRNDAAKDCP. Residues Ser-754 and Ser-757 each carry the phosphoserine modification. One copy of the SURP motif 2 repeat lies at 787–830; sequence TAEKLARFVAQVGPEIEQFSIENSTDNPDLWFLHDQNSSAFKFY. 3 disordered regions span residues 849–930, 982–1002, and 1030–1061; these read NLHT…EAAE, RIAYDRPRGRPMSKKKKPKDL, and LGSLGKGIREPVSVGTPSEGEGLGADGQEHKE. Ser-863 is subject to Phosphoserine. 2 stretches are compositionally biased toward acidic residues: residues 868–877 and 885–904; these read MEGEAEFEDE and LESPEVMPEEEDEDDEDGGE. The span at 990–999 shows a compositional bias: basic residues; sequence GRPMSKKKKP. The short motif at 995-1000 is the Nuclear localization signal element; sequence KKKKPK. The 47-residue stretch at 1011–1057 folds into the G-patch domain; it reads DKNLGFQMLQKMGWKEGHGLGSLGKGIREPVSVGTPSEGEGLGADGQ.

As to expression, detected in adult testis, and in fetal brain and kidney.

Its subcellular location is the nucleus. In terms of biological role, may play a role in mRNA splicing. The sequence is that of SURP and G-patch domain-containing protein 2 (SUGP2) from Homo sapiens (Human).